A 96-amino-acid polypeptide reads, in one-letter code: Co-chaperonin GroES (96 aa).

This sequence belongs to the GroES chaperonin family. In terms of assembly, heptamer of 7 subunits arranged in a ring. Interacts with the chaperonin GroEL.

It is found in the cytoplasm. Functionally, together with the chaperonin GroEL, plays an essential role in assisting protein folding. The GroEL-GroES system forms a nano-cage that allows encapsulation of the non-native substrate proteins and provides a physical environment optimized to promote and accelerate protein folding. GroES binds to the apical surface of the GroEL ring, thereby capping the opening of the GroEL channel. The sequence is that of Co-chaperonin GroES from Shewanella frigidimarina (strain NCIMB 400).